We begin with the raw amino-acid sequence, 202 residues long: Imidazoleglycerol-phosphate dehydratase (202 aa).

It belongs to the imidazoleglycerol-phosphate dehydratase family.

Its subcellular location is the cytoplasm. The enzyme catalyses D-erythro-1-(imidazol-4-yl)glycerol 3-phosphate = 3-(imidazol-4-yl)-2-oxopropyl phosphate + H2O. Its pathway is amino-acid biosynthesis; L-histidine biosynthesis; L-histidine from 5-phospho-alpha-D-ribose 1-diphosphate: step 6/9. This Brucella abortus (strain S19) protein is Imidazoleglycerol-phosphate dehydratase.